Reading from the N-terminus, the 235-residue chain is Leucyl/phenylalanyl-tRNA--protein transferase (235 aa).

Belongs to the L/F-transferase family.

The protein localises to the cytoplasm. It catalyses the reaction N-terminal L-lysyl-[protein] + L-leucyl-tRNA(Leu) = N-terminal L-leucyl-L-lysyl-[protein] + tRNA(Leu) + H(+). The catalysed reaction is N-terminal L-arginyl-[protein] + L-leucyl-tRNA(Leu) = N-terminal L-leucyl-L-arginyl-[protein] + tRNA(Leu) + H(+). The enzyme catalyses L-phenylalanyl-tRNA(Phe) + an N-terminal L-alpha-aminoacyl-[protein] = an N-terminal L-phenylalanyl-L-alpha-aminoacyl-[protein] + tRNA(Phe). Its function is as follows. Functions in the N-end rule pathway of protein degradation where it conjugates Leu, Phe and, less efficiently, Met from aminoacyl-tRNAs to the N-termini of proteins containing an N-terminal arginine or lysine. The chain is Leucyl/phenylalanyl-tRNA--protein transferase from Cellvibrio japonicus (strain Ueda107) (Pseudomonas fluorescens subsp. cellulosa).